A 92-amino-acid chain; its full sequence is Small ribosomal subunit protein uS19c (92 aa).

It belongs to the universal ribosomal protein uS19 family.

Its subcellular location is the plastid. It is found in the chloroplast. Its function is as follows. Protein S19 forms a complex with S13 that binds strongly to the 16S ribosomal RNA. The sequence is that of Small ribosomal subunit protein uS19c from Nicotiana sylvestris (Wood tobacco).